A 352-amino-acid chain; its full sequence is Ion-translocating oxidoreductase complex subunit D (352 aa).

Transmembrane regions (helical) follow at residues 20–40 (IMLL…WFFG), 42–62 (GTLV…ALVL), 89–109 (IPPL…VIIA), and 123–143 (PAMI…TSWL). Position 187 is an FMN phosphoryl threonine (threonine 187). Helical transmembrane passes span 214 to 234 (ILAG…GLWL), 242 to 262 (WHIP…GWLF), 267 to 287 (LAAP…FFIL), 301 to 321 (LIFG…GGYP), and 322 to 342 (DGVA…DYYT).

Belongs to the NqrB/RnfD family. As to quaternary structure, the complex is composed of six subunits: RsxA, RsxB, RsxC, RsxD, RsxE and RsxG. The cofactor is FMN.

It is found in the cell inner membrane. Its function is as follows. Part of a membrane-bound complex that couples electron transfer with translocation of ions across the membrane. Required to maintain the reduced state of SoxR. The sequence is that of Ion-translocating oxidoreductase complex subunit D from Shigella sonnei (strain Ss046).